The following is a 298-amino-acid chain: Tyrosine recombinase XerC (298 aa).

The Core-binding (CB) domain occupies 2–88 (TDLHTDVERY…ALRSFFDWLV (87 aa)). Residues 109 to 288 (HLPKNIDVDD…DFQHLASVYD (180 aa)) form the Tyr recombinase domain. Active-site residues include Arg148, Lys172, His240, Arg243, and His266. Tyr275 functions as the O-(3'-phospho-DNA)-tyrosine intermediate in the catalytic mechanism.

Belongs to the 'phage' integrase family. XerC subfamily. Forms a cyclic heterotetrameric complex composed of two molecules of XerC and two molecules of XerD, in which XerC interacts with XerD via its C-terminal region, XerD interacts with XerC via its C-terminal region and so on.

The protein localises to the cytoplasm. With respect to regulation, ftsK may regulate the catalytic switch between XerC and XerD in the heterotetrameric complex during the two steps of the recombination process. In terms of biological role, site-specific tyrosine recombinase, which acts by catalyzing the cutting and rejoining of the recombining DNA molecules. Binds cooperatively to specific DNA consensus sequences that are separated from XerD binding sites by a short central region, forming the heterotetrameric XerC-XerD complex that recombines DNA substrates. The complex is essential to convert dimers of the bacterial chromosome into monomers to permit their segregation at cell division. It also contributes to the segregational stability of plasmids. In the complex XerC specifically exchanges the top DNA strands. In Escherichia coli O139:H28 (strain E24377A / ETEC), this protein is Tyrosine recombinase XerC.